The chain runs to 412 residues: Serine hydroxymethyltransferase (412 aa).

Residues Leu125 and 129–131 each bind (6S)-5,6,7,8-tetrahydrofolate; that span reads GHL. Lys234 bears the N6-(pyridoxal phosphate)lysine mark. Residue Glu250 participates in (6S)-5,6,7,8-tetrahydrofolate binding.

Belongs to the SHMT family. Homodimer. Pyridoxal 5'-phosphate is required as a cofactor.

The protein localises to the cytoplasm. It carries out the reaction (6R)-5,10-methylene-5,6,7,8-tetrahydrofolate + glycine + H2O = (6S)-5,6,7,8-tetrahydrofolate + L-serine. It functions in the pathway one-carbon metabolism; tetrahydrofolate interconversion. It participates in amino-acid biosynthesis; glycine biosynthesis; glycine from L-serine: step 1/1. Catalyzes the reversible interconversion of serine and glycine with tetrahydrofolate (THF) serving as the one-carbon carrier. This reaction serves as the major source of one-carbon groups required for the biosynthesis of purines, thymidylate, methionine, and other important biomolecules. Also exhibits THF-independent aldolase activity toward beta-hydroxyamino acids, producing glycine and aldehydes, via a retro-aldol mechanism. The protein is Serine hydroxymethyltransferase of Deinococcus geothermalis (strain DSM 11300 / CIP 105573 / AG-3a).